The chain runs to 187 residues: Crossover junction endodeoxyribonuclease RuvC (187 aa).

Catalysis depends on residues aspartate 7, glutamate 67, and aspartate 140. Mg(2+) is bound by residues aspartate 7, glutamate 67, and aspartate 140.

Belongs to the RuvC family. As to quaternary structure, homodimer which binds Holliday junction (HJ) DNA. The HJ becomes 2-fold symmetrical on binding to RuvC with unstacked arms; it has a different conformation from HJ DNA in complex with RuvA. In the full resolvosome a probable DNA-RuvA(4)-RuvB(12)-RuvC(2) complex forms which resolves the HJ. Mg(2+) serves as cofactor.

It localises to the cytoplasm. The enzyme catalyses Endonucleolytic cleavage at a junction such as a reciprocal single-stranded crossover between two homologous DNA duplexes (Holliday junction).. Functionally, the RuvA-RuvB-RuvC complex processes Holliday junction (HJ) DNA during genetic recombination and DNA repair. Endonuclease that resolves HJ intermediates. Cleaves cruciform DNA by making single-stranded nicks across the HJ at symmetrical positions within the homologous arms, yielding a 5'-phosphate and a 3'-hydroxyl group; requires a central core of homology in the junction. The consensus cleavage sequence is 5'-(A/T)TT(C/G)-3'. Cleavage occurs on the 3'-side of the TT dinucleotide at the point of strand exchange. HJ branch migration catalyzed by RuvA-RuvB allows RuvC to scan DNA until it finds its consensus sequence, where it cleaves and resolves the cruciform DNA. The polypeptide is Crossover junction endodeoxyribonuclease RuvC (Chlorobium phaeobacteroides (strain DSM 266 / SMG 266 / 2430)).